Here is an 85-residue protein sequence, read N- to C-terminus: Large ribosomal subunit protein bL31B (85 aa).

It belongs to the bacterial ribosomal protein bL31 family. Type B subfamily. As to quaternary structure, part of the 50S ribosomal subunit.

The sequence is that of Large ribosomal subunit protein bL31B from Staphylococcus haemolyticus (strain JCSC1435).